The sequence spans 642 residues: MYPAGPPAGPVPRRGRRPLPGPPAPAPAPVPAARPPPPAPGPRPRVAVKMAFRKAYSIKDKLQAIERVKGGERQASVCRDFGVPGGTLRGWLKDEPKLRWFLEQLGGEVGTQRKKMRLANEEEIDRAVYAWFLALRQHGVPLSGPLIQAQAEAFARQIYGPECTFKASHGWFWRWQKRHGISSQRFYGEAGPPAPSPAPGPPVKEEPALPSGAGPLPDRAPAPPPPAEGGYGDEQIYSASVTGLYWKLLPEQAAPPGAGDPGAGGCGRRWRGDRVTVLLAANLTGSHKLKPLVIGRLPDPPSLRHHNQDKFPASYRYSPDAWLSRPLLRGWFFEEFVPGVKRYLRRSCLQQKAVLLVAHPPCPSPAASMPALDSEDAPVRCRPEPLGPPEELQTPDGAVRVLFLSKGSSRAHIPAPLEQGVVAAFKQLYKRELLRLAVSCASGSPLDFMRSFMLKDMLYLAGLSWDLVQAGSIERCWLLGLRAAFEPRPGEDSAGQPAQAEEAAEHSRVLSDLTHLAALAYKCLAPEEVAEWLHLDDDGGPPEGCREEVGPALPPAAPPAPASLPSAMGGGEDEEEATDYGGTSVPTAGEAVRGLETALRWLENQDPREVGPLRLVQLRSLISMARRLGGIGHTPAGPYDGV.

2 stretches are compositionally biased toward pro residues: residues 1-10 (MYPAGPPAGP) and 19-43 (LPGP…PGPR). Positions 1-45 (MYPAGPPAGPVPRRGRRPLPGPPAPAPAPVPAARPPPPAPGPRPR) are disordered. Positions 47-98 (AVKMAFRKAYSIKDKLQAIERVKGGERQASVCRDFGVPGGTLRGWLKDEPKL) constitute an HTH psq-type domain. 2 DNA-binding regions (H-T-H motif) span residues 74–94 (QASV…WLKD) and 145–178 (PLIQ…WQKR). The HTH CENPB-type domain occupies 112–185 (QRKKMRLANE…QKRHGISSQR (74 aa)). Residues 185 to 233 (RFYGEAGPPAPSPAPGPPVKEEPALPSGAGPLPDRAPAPPPPAEGGYGD) form a disordered region. Pro residues-rich tracts occupy residues 192–202 (PPAPSPAPGPP) and 218–227 (DRAPAPPPPA). 2 DDE-1 domains span residues 233 to 357 (DEQI…VLLV) and 410 to 477 (RAHI…ERCW). The segment at 535–587 (LDDDGGPPEGCREEVGPALPPAAPPAPASLPSAMGGGEDEEEATDYGGTSVPT) is disordered. The span at 552-562 (ALPPAAPPAPA) shows a compositional bias: pro residues.

It belongs to the tigger transposable element derived protein family.

The protein resides in the nucleus. The chain is Tigger transposable element-derived protein 5 (TIGD5) from Homo sapiens (Human).